Here is a 287-residue protein sequence, read N- to C-terminus: MKKINVVYNPAFNPISSKLNQTQLLKNASEELDIELKFFTSFDINTTKAKANLPFISNKILFMDKNIALARWLESNGFEVINSSIGINNADNKGLSHAIIAQYPFIKQIKTLLGPQNFDREWNPVMLDVFINQIKQSMEFPVIVKSVFGSFGDYVFLCLDEQKLRKTLMSFNQQAIVQKYITCSKGESVRVIVVNNKVIGALHTTNNSDFRSNLNKGAKAERFFLNKEQENLAVKISKVMQLFYCGIDFLFDQDRSLIFCEVNPNVQLTRSSMYLNTNLAIELLKAI.

Residues 115-287 (PQNFDREWNP…NLAIELLKAI (173 aa)) enclose the ATP-grasp domain. Residues Lys-145 and 178–188 (QKYITCSKGES) contribute to the ATP site. The Mg(2+) site is built by Asp-248, Glu-261, and Asn-263. Asp-248, Glu-261, and Asn-263 together coordinate Mn(2+).

This sequence belongs to the RimK family.

This is an uncharacterized protein from Mycoplasma genitalium (strain ATCC 33530 / DSM 19775 / NCTC 10195 / G37) (Mycoplasmoides genitalium).